A 627-amino-acid chain; its full sequence is tRNA uridine 5-carboxymethylaminomethyl modification enzyme MnmG (627 aa).

14–19 (GAGHAG) is an FAD binding site. Position 275–289 (275–289 (GPRYCPSIEDKVVKF)) interacts with NAD(+).

Belongs to the MnmG family. In terms of assembly, homodimer. Heterotetramer of two MnmE and two MnmG subunits. FAD is required as a cofactor.

Its subcellular location is the cytoplasm. Functionally, NAD-binding protein involved in the addition of a carboxymethylaminomethyl (cmnm) group at the wobble position (U34) of certain tRNAs, forming tRNA-cmnm(5)s(2)U34. This is tRNA uridine 5-carboxymethylaminomethyl modification enzyme MnmG from Lachnoclostridium phytofermentans (strain ATCC 700394 / DSM 18823 / ISDg) (Clostridium phytofermentans).